The primary structure comprises 142 residues: Ribosome-binding factor A (142 aa).

The interval 119–142 (ETLGEVQSESDQPTTDETTTVNKT) is disordered. The span at 123-142 (EVQSESDQPTTDETTTVNKT) shows a compositional bias: polar residues.

This sequence belongs to the RbfA family. In terms of assembly, monomer. Binds 30S ribosomal subunits, but not 50S ribosomal subunits or 70S ribosomes.

It localises to the cytoplasm. Functionally, one of several proteins that assist in the late maturation steps of the functional core of the 30S ribosomal subunit. Associates with free 30S ribosomal subunits (but not with 30S subunits that are part of 70S ribosomes or polysomes). Required for efficient processing of 16S rRNA. May interact with the 5'-terminal helix region of 16S rRNA. The chain is Ribosome-binding factor A from Prochlorococcus marinus (strain MIT 9303).